Consider the following 127-residue polypeptide: Small ribosomal subunit protein uS11 (127 aa).

The protein belongs to the universal ribosomal protein uS11 family. In terms of assembly, part of the 30S ribosomal subunit. Interacts with proteins S7 and S18. Binds to IF-3.

In terms of biological role, located on the platform of the 30S subunit, it bridges several disparate RNA helices of the 16S rRNA. Forms part of the Shine-Dalgarno cleft in the 70S ribosome. This is Small ribosomal subunit protein uS11 from Prosthecochloris aestuarii (strain DSM 271 / SK 413).